Consider the following 427-residue polypeptide: Glutamate-1-semialdehyde 2,1-aminomutase (427 aa).

K265 is subject to N6-(pyridoxal phosphate)lysine.

Belongs to the class-III pyridoxal-phosphate-dependent aminotransferase family. HemL subfamily. Homodimer. The cofactor is pyridoxal 5'-phosphate.

Its subcellular location is the cytoplasm. It carries out the reaction (S)-4-amino-5-oxopentanoate = 5-aminolevulinate. The protein operates within porphyrin-containing compound metabolism; protoporphyrin-IX biosynthesis; 5-aminolevulinate from L-glutamyl-tRNA(Glu): step 2/2. The protein is Glutamate-1-semialdehyde 2,1-aminomutase of Shewanella amazonensis (strain ATCC BAA-1098 / SB2B).